Consider the following 779-residue polypeptide: Transcriptional regulator QRICH1 (779 aa).

M1 carries the post-translational modification N-acetylmethionine. Residues 6–48 (ENTISFEEYIRVKARSVPQHRMKEFLDSLASKGPEALQEFQQT) enclose the CARD domain. Disordered stretches follow at residues 141–163 (QGQA…PSPS) and 219–242 (ALSP…TASV). At S346 the chain carries Phosphoserine. Residues K354 and K359 each participate in a glycyl lysine isopeptide (Lys-Gly) (interchain with G-Cter in SUMO2) cross-link. A compositionally biased stretch (low complexity) spans 420 to 430 (QQQPQQQTPQE). The segment at 420–443 (QQQPQQQTPQEQTPPPPQQQQQQQ) is disordered. Residue S467 is modified to Phosphoserine.

It localises to the nucleus. Its subcellular location is the cytoplasm. The protein resides in the cell membrane. Transcriptional regulator that acts as a mediator of the integrated stress response (ISR) through transcriptional control of protein homeostasis under conditions of ER stress. Controls the outcome of the unfolded protein response (UPR), an ER-stress response pathway that either promotes recovery of ER homeostasis and cell survival, or triggers the terminal UPR which elicits programmed cell death when ER stress is prolonged and unresolved. ER stress induces QRICH1 translation by a ribosome translation re-initiation mechanism in response to EIF2S1/eIF-2-alpha phosphorylation, and stress-induced QRICH1 regulates a transcriptional program associated with protein translation, protein secretion-mediated proteotoxicity and cell death during the terminal UPR. May cooperate with ATF4 transcription factor signaling to regulate ER homeostasis which is critical for cell viability. Up-regulates CASP3/caspase-3 activity in epithelial cells under ER stress. Central regulator of proteotoxicity associated with ER stress-mediated inflammatory diseases in the intestines and liver. Involved in chondrocyte hypertrophy, a process required for normal longitudinal bone growth. The sequence is that of Transcriptional regulator QRICH1 (QRICH1) from Bos taurus (Bovine).